The sequence spans 412 residues: Putative oxidoreductase bli-4, mitochondrial (412 aa).

The transit peptide at 1–55 directs the protein to the mitochondrion; the sequence is MSTKLCQRIARTATLSPTSLVPRSSRLIPIVSSAAVRPSSAIPTRRPFSTTESRY. Ile108, Asn120, Asn186, Tyr269, Lys273, Val308, Thr310, and Gln312 together coordinate NADP(+). Tyr269 (proton donor) is an active-site residue. Lys273 functions as the Lowers pKa of active site Tyr in the catalytic mechanism.

It belongs to the short-chain dehydrogenases/reductases (SDR) family.

The protein resides in the mitochondrion. Its function is as follows. May play a role as an NAD-dependent dehydrogenase in the mitochondria. This is Putative oxidoreductase bli-4, mitochondrial (bli-4) from Neurospora crassa (strain ATCC 24698 / 74-OR23-1A / CBS 708.71 / DSM 1257 / FGSC 987).